The chain runs to 434 residues: KH domain-containing protein 3 (434 aa).

An involved in RNA binding region spans residues 1–39 (MATLKTFRTLVQLKHKLGKAYEIVGEPRLPKWFHVEYLE). Residues 40–118 (DPKKMYVEPT…CRMKLMEKEA (79 aa)) enclose the KH; atypical domain. A phosphothreonine mark is found at threonine 267 and threonine 279. Residues 334 to 434 (VREAATQQTP…RAVWEPFVML (101 aa)) are required for interaction with NUMA1 and regulation of apoptosis in response to DNA damage.

This sequence belongs to the KHDC1 family. As to quaternary structure, component of the subcortical maternal complex (SCMC), at least composed of NLRP5, KHDC3, OOEP, and TLE6. Within the complex, interacts with NLRP5, KHDC3 and TLE6. The SCMC may facilitate translocation of its components between the nuclear and cytoplasmic compartments. Forms a scaffold complex with OOEP/FLOPED, and interacts with BLM and TRIM25 at DNA replication forks. Interacts with PARP1; the interaction is increased following the formation of DNA double-strand breaks. Interacts (via C-terminus) with NUMA1.

It localises to the cytoplasm. The protein resides in the cell cortex. The protein localises to the nucleus. It is found in the mitochondrion. Its subcellular location is the cytoskeleton. It localises to the microtubule organizing center. The protein resides in the centrosome. The protein localises to the chromosome. Its function is as follows. Component of the subcortical maternal complex (SCMC), a multiprotein complex that plays a key role in early embryonic development. The SCMC complex is a structural constituent of cytoplasmic lattices, which consist in fibrous structures found in the cytoplasm of oocytes and preimplantation embryos. They are required to store maternal proteins critical for embryonic development, such as proteins that control epigenetic reprogramming of the preimplantation embryo, and prevent their degradation or activation. KHDC3 ensures proper spindle assembly by regulating the localization of AURKA via RHOA signaling and of PLK1 via a RHOA-independent process. Required for the localization of MAD2L1 to kinetochores to enable spindle assembly checkpoint function. As part of the OOEP-KHDC3 scaffold, recruits BLM and TRIM25 to DNA replication forks, thereby promoting the ubiquitination of BLM by TRIM25, enhancing BLM retainment at replication forks and therefore promoting stalled replication fork restart. Regulates homologous recombination-mediated DNA repair via recruitment of RAD51 to sites of DNA double-strand breaks, and sustainment of PARP1 activity, which in turn modulates downstream ATM or ATR activation. Activation of ATM or ATR in response to DNA double-strand breaks may be cell-type specific. Its role in DNA double-strand break repair is independent of its role in restarting stalled replication forks. Promotes neural stem cell neurogenesis and neuronal differentiation in the hippocampus. May regulate normal development of learning, memory and anxiety. Capable of binding RNA. In Rattus norvegicus (Rat), this protein is KH domain-containing protein 3.